Consider the following 88-residue polypeptide: Protein GOLVEN 10 (88 aa).

The first 22 residues, Met-1–Ser-22, serve as a signal peptide directing secretion. Residues Arg-23–Ala-75 constitute a propeptide that is removed on maturation. The disordered stretch occupies residues Val-44–Asn-88. The residue at position 77 (Tyr-77) is a Sulfotyrosine. A Hydroxyproline modification is found at Pro-85.

Belongs to the RGF family. In terms of assembly, binds to LRR receptor-like serine/threonine-protein kinases RGI1, RGI2 and RGI3 to trigger their dimerization with SERK proteins and subsequent signaling. As to expression, expressed in roots, shoots, leaves and flowers.

It localises to the secreted. The protein localises to the endoplasmic reticulum. Functionally, signaling peptide (root growth factor) that maintains the postembryonic root stem cell niche. Regulates the pattern of root growth and lateral root development by modulating the length and the number of cortical cells in the root apical meristem (RAM), and the anticlinal asymmetric cell divisions in lateral root initiation cells. The protein is Protein GOLVEN 10 of Arabidopsis thaliana (Mouse-ear cress).